The chain runs to 376 residues: Polygalacturonase (376 aa).

The first 20 residues, 1–20 (MASSLKLGLIALLGATAVNA), serve as a signal peptide directing secretion. A disulfide bond links Cys-39 and Cys-57. Residues 170 to 208 (AKELTLSGITVDTADGDSNGGHNTDAFDVGSSNGVYITS) form a PbH1 1 repeat. Catalysis depends on Asp-215, which acts as the Proton donor. Residues Cys-217 and Cys-233 are joined by a disulfide bond. PbH1 repeat units lie at residues 223–243 (GTNVHFTGAQCTGGHGISIGS), 252–273 (VDGVTVESCTIKDSDNGVRIKT), 281–303 (VQGVTYKDITLSGIAKYGIVIEQ), and 315–360 (TSGV…SITG). The active site involves His-237. 2 disulfides stabilise this stretch: Cys-343/Cys-348 and Cys-367/Cys-376.

The protein belongs to the glycosyl hydrolase 28 family.

Its subcellular location is the secreted. It carries out the reaction (1,4-alpha-D-galacturonosyl)n+m + H2O = (1,4-alpha-D-galacturonosyl)n + (1,4-alpha-D-galacturonosyl)m.. In Penicillium griseoroseum, this protein is Polygalacturonase (PGG1).